We begin with the raw amino-acid sequence, 950 residues long: Leucine--tRNA ligase (950 aa).

Residues 72 to 83 (PYPSGEGLHVGH) carry the 'HIGH' region motif. A 'KMSKS' region motif is present at residues 722–726 (KIGKS). Residue K725 participates in ATP binding.

The protein belongs to the class-I aminoacyl-tRNA synthetase family.

It is found in the cytoplasm. It catalyses the reaction tRNA(Leu) + L-leucine + ATP = L-leucyl-tRNA(Leu) + AMP + diphosphate. The chain is Leucine--tRNA ligase from Mycobacterium sp. (strain KMS).